Reading from the N-terminus, the 806-residue chain is Protein translocase subunit SecA (806 aa).

Residues Q87, G105–T109, and D493 each bind ATP.

This sequence belongs to the SecA family. In terms of assembly, monomer and homodimer. Part of the essential Sec protein translocation apparatus which comprises SecA, SecYEG and auxiliary proteins SecDF. Other proteins may also be involved.

The protein localises to the cell membrane. The protein resides in the cytoplasm. The enzyme catalyses ATP + H2O + cellular proteinSide 1 = ADP + phosphate + cellular proteinSide 2.. Part of the Sec protein translocase complex. Interacts with the SecYEG preprotein conducting channel. Has a central role in coupling the hydrolysis of ATP to the transfer of proteins into and across the cell membrane, serving as an ATP-driven molecular motor driving the stepwise translocation of polypeptide chains across the membrane. This chain is Protein translocase subunit SecA, found in Mycoplasma genitalium (strain ATCC 33530 / DSM 19775 / NCTC 10195 / G37) (Mycoplasmoides genitalium).